We begin with the raw amino-acid sequence, 204 residues long: Outer-membrane lipoprotein carrier protein (204 aa).

The N-terminal stretch at 1-21 (MKKYLNLTALLLVGISNVTWA) is a signal peptide.

The protein belongs to the LolA family. In terms of assembly, monomer.

It localises to the periplasm. In terms of biological role, participates in the translocation of lipoproteins from the inner membrane to the outer membrane. Only forms a complex with a lipoprotein if the residue after the N-terminal Cys is not an aspartate (The Asp acts as a targeting signal to indicate that the lipoprotein should stay in the inner membrane). The polypeptide is Outer-membrane lipoprotein carrier protein (Histophilus somni (strain 2336) (Haemophilus somnus)).